The primary structure comprises 226 residues: Transcriptional regulatory protein PcoR (226 aa).

Positions 3–117 (RILIVEDEQK…ELVARVRTLL (115 aa)) constitute a Response regulatory domain. A 4-aspartylphosphate modification is found at Asp-52. The ompR/PhoB-type DNA-binding region spans 125-223 (ATVCTIADMT…VRGAGYVLEI (99 aa)).

Phosphorylated by PcoS.

The protein resides in the cytoplasm. Probable member of a two-component regulatory system PcoS/PcoR. May be involved in the activation of copper resistance gene operon pcoABCD by binding to a specific site on the cop operon promoter (copper box). The polypeptide is Transcriptional regulatory protein PcoR (pcoR) (Escherichia coli).